Here is a 314-residue protein sequence, read N- to C-terminus: tRNA dimethylallyltransferase 2 (314 aa).

8–15 (GPTGTGKS) provides a ligand contact to ATP. 10–15 (TGTGKS) contributes to the substrate binding site.

This sequence belongs to the IPP transferase family. In terms of assembly, monomer. The cofactor is Mg(2+).

The enzyme catalyses adenosine(37) in tRNA + dimethylallyl diphosphate = N(6)-dimethylallyladenosine(37) in tRNA + diphosphate. In terms of biological role, catalyzes the transfer of a dimethylallyl group onto the adenine at position 37 in tRNAs that read codons beginning with uridine, leading to the formation of N6-(dimethylallyl)adenosine (i(6)A). In Mycobacterium ulcerans (strain Agy99), this protein is tRNA dimethylallyltransferase 2.